The chain runs to 260 residues: Transcription factor SUM-1 (260 aa).

Positions 112 to 163 constitute a bHLH domain; sequence DKRKAATLRERRRLRKVNEAFEALKRHTCANPNQRLPKVEILRNAIEYIEKL. A disordered region spans residues 171–208; the sequence is KANGDSEMDSAETSSNTSDAMTDGSSPGSYSSDKAQQY. Residues 181 to 205 are compositionally biased toward polar residues; the sequence is AETSSNTSDAMTDGSSPGSYSSDKA.

Efficient DNA binding requires dimerization with another bHLH protein. Homodimer, and heterodimer with the ubiquitous bHLH protein E12.

It localises to the nucleus. In terms of biological role, regulatory factor during embryogenesis. Conversion of pluripotent secondary mesenchyme cells to myogenic cells. It binds to the MCK enhancer element. This Lytechinus variegatus (Green sea urchin) protein is Transcription factor SUM-1 (SUM-1).